A 534-amino-acid chain; its full sequence is Peptide chain release factor 3 (534 aa).

The region spanning 9–278 (ARRRTFAIIS…FFVEHAPPPQ (270 aa)) is the tr-type G domain. GTP-binding positions include 18-25 (SHPDAGKT), 86-90 (DTPGH), and 140-143 (NKLD).

It belongs to the TRAFAC class translation factor GTPase superfamily. Classic translation factor GTPase family. PrfC subfamily.

Its subcellular location is the cytoplasm. Increases the formation of ribosomal termination complexes and stimulates activities of RF-1 and RF-2. It binds guanine nucleotides and has strong preference for UGA stop codons. It may interact directly with the ribosome. The stimulation of RF-1 and RF-2 is significantly reduced by GTP and GDP, but not by GMP. The protein is Peptide chain release factor 3 of Xanthomonas campestris pv. campestris (strain 8004).